Here is a 337-residue protein sequence, read N- to C-terminus: Glyceraldehyde-3-phosphate dehydrogenase (337 aa).

Residues 12 to 13 (RI), Asp34, and Arg79 each bind NAD(+). Residues 150–152 (SCT), Thr181, 210–211 (TG), and Arg233 contribute to the D-glyceraldehyde 3-phosphate site. The active-site Nucleophile is the Cys151. Position 315 (Asn315) interacts with NAD(+).

It belongs to the glyceraldehyde-3-phosphate dehydrogenase family. As to quaternary structure, homotetramer.

It localises to the cytoplasm. It catalyses the reaction D-glyceraldehyde 3-phosphate + phosphate + NAD(+) = (2R)-3-phospho-glyceroyl phosphate + NADH + H(+). It participates in carbohydrate degradation; glycolysis; pyruvate from D-glyceraldehyde 3-phosphate: step 1/5. The chain is Glyceraldehyde-3-phosphate dehydrogenase (GPD) from Podospora anserina (Pleurage anserina).